Here is a 1374-residue protein sequence, read N- to C-terminus: Alpha,alpha-trehalose-phosphate synthase [UDP-forming] 1 (1374 aa).

Disordered regions lie at residues 28–66 (DTGK…SDKD), 86–117 (YTPG…DDEG), and 1352–1374 (KADS…SKQQ). 2 stretches are compositionally biased toward basic and acidic residues: residues 56–66 (DPFDRPKSDKD) and 86–95 (YTPGKEKGVD). Composition is skewed to acidic residues over residues 96–109 (QDES…EDHD) and 1356–1368 (YYDD…DQED).

The protein in the N-terminal section; belongs to the glycosyltransferase 20 family. It in the C-terminal section; belongs to the gob-1 trehalose phosphatase family.

The enzyme catalyses D-glucose 6-phosphate + UDP-alpha-D-glucose = alpha,alpha-trehalose 6-phosphate + UDP + H(+). Its function is as follows. Catalyzes the production of trehalose from glucose-6-phosphate and UDP-alpha-D-glucose in a 2 step process. This is Alpha,alpha-trehalose-phosphate synthase [UDP-forming] 1 (tps-1) from Caenorhabditis briggsae.